Consider the following 529-residue polypeptide: Peptide chain release factor 3 (529 aa).

The tr-type G domain maps to 11–280 (AKRRTFAIIS…GLVEWAPAPM (270 aa)). Residues 20–27 (SHPDAGKT), 88–92 (DTPGH), and 142–145 (NKLD) each bind GTP.

It belongs to the TRAFAC class translation factor GTPase superfamily. Classic translation factor GTPase family. PrfC subfamily.

It is found in the cytoplasm. Functionally, increases the formation of ribosomal termination complexes and stimulates activities of RF-1 and RF-2. It binds guanine nucleotides and has strong preference for UGA stop codons. It may interact directly with the ribosome. The stimulation of RF-1 and RF-2 is significantly reduced by GTP and GDP, but not by GMP. The protein is Peptide chain release factor 3 of Shigella flexneri.